The chain runs to 125 residues: Holo-[acyl-carrier-protein] synthase (125 aa).

The Mg(2+) site is built by Asp8 and Glu57.

Belongs to the P-Pant transferase superfamily. AcpS family. Requires Mg(2+) as cofactor.

It localises to the cytoplasm. The catalysed reaction is apo-[ACP] + CoA = holo-[ACP] + adenosine 3',5'-bisphosphate + H(+). Functionally, transfers the 4'-phosphopantetheine moiety from coenzyme A to a Ser of acyl-carrier-protein. This Nitrosospira multiformis (strain ATCC 25196 / NCIMB 11849 / C 71) protein is Holo-[acyl-carrier-protein] synthase.